The chain runs to 124 residues: UPF0102 protein Noc_0355 (124 aa).

It belongs to the UPF0102 family.

This Nitrosococcus oceani (strain ATCC 19707 / BCRC 17464 / JCM 30415 / NCIMB 11848 / C-107) protein is UPF0102 protein Noc_0355.